A 584-amino-acid polypeptide reads, in one-letter code: 2-succinyl-5-enolpyruvyl-6-hydroxy-3-cyclohexene-1-carboxylate synthase (584 aa).

The protein belongs to the TPP enzyme family. MenD subfamily. As to quaternary structure, homodimer. It depends on Mg(2+) as a cofactor. The cofactor is Mn(2+). Thiamine diphosphate is required as a cofactor.

The catalysed reaction is isochorismate + 2-oxoglutarate + H(+) = 5-enolpyruvoyl-6-hydroxy-2-succinyl-cyclohex-3-ene-1-carboxylate + CO2. The protein operates within quinol/quinone metabolism; 1,4-dihydroxy-2-naphthoate biosynthesis; 1,4-dihydroxy-2-naphthoate from chorismate: step 2/7. It functions in the pathway quinol/quinone metabolism; menaquinone biosynthesis. Functionally, catalyzes the thiamine diphosphate-dependent decarboxylation of 2-oxoglutarate and the subsequent addition of the resulting succinic semialdehyde-thiamine pyrophosphate anion to isochorismate to yield 2-succinyl-5-enolpyruvyl-6-hydroxy-3-cyclohexene-1-carboxylate (SEPHCHC). The chain is 2-succinyl-5-enolpyruvyl-6-hydroxy-3-cyclohexene-1-carboxylate synthase from Bacillus cereus (strain ATCC 14579 / DSM 31 / CCUG 7414 / JCM 2152 / NBRC 15305 / NCIMB 9373 / NCTC 2599 / NRRL B-3711).